The primary structure comprises 666 residues: MAAEALLSSLLGLLFLGLLLPAHLTGGVGSLNLEELSEMRYGIQILPLPVMGGQSQASDVVVVSSKYKQRYECRLPAGAIHFQREREEETPAYQGPGIPELLSPMRDAPCLLKTKDWWTYEFCYGRHIQQYHMEDSEIKGDVLYLGYYQSAFNWDDETAKASKQHRLKRYHSQTYGNGSKCDLNGKPREAEVRFLCDEGAGISGDYIDRVDEPFSCSYVLSIRTSRLCPHPLLRPPASAAPQAILCHPALQPDEYMAYLQRQAESKQHEEKVTEEVQDTDHQVWSGSKAAGAPPKKEDVSPTKEDKESEFWKMLQEPEEQATGTEEAQAGEQDLNHEAAADPAPAPPTDFQNNVQVKLIRSPADLIRLIEELKGAEKGKPSVRQEQPGDDTTEAPQREAEAKGKGGEPRGLVEEEDGDEEEEDEDEDEQQLLGEFEKELEGMLLPSDRERLRSEVKAGMERELENIIQETEKELDPEGLRKESEREQAILALTSTLDKLIKRLQESQSPELVQKYKKRRVVPQKPPPSPHPTEEEPEHRVRVRVTKLRHGGPNQDLTVLEMNRENPQLKQIEGLVTEVLEREGLTAEGKIEIKIVRPGAEGKEEDTRWLTDEDTRNLKEIFFNILVQGAEEANKERQRQSELESNYRRVWGSPGGEDTGDLDEFDF.

Residues 1–30 (MAAEALLSSLLGLLFLGLLLPAHLTGGVGS) form the signal peptide. An MRH domain is found at 108 to 230 (APCLLKTKDW…SIRTSRLCPH (123 aa)). A disulfide bridge links Cys-110 with Cys-123. Residues Trp-117, Trp-118, and Gln-130 each contribute to the a mannooligosaccharide derivative site. N-linked (GlcNAc...) asparagine glycosylation is present at Asn-177. 2 disulfide bridges follow: Cys-181-Cys-216 and Cys-196-Cys-228. A mannooligosaccharide derivative contacts are provided by Asp-182, Arg-188, Glu-212, and Tyr-218. Disordered stretches follow at residues 261 to 356 (RQAE…NVQV), 370 to 449 (EELK…SDRE), 505 to 540 (ESQS…EHRV), and 631 to 666 (EANK…EFDF). 2 stretches are compositionally biased toward basic and acidic residues: residues 263–281 (AESK…DTDH) and 294–310 (PKKE…ESEF). Over residues 320-332 (QATGTEEAQAGEQ) the composition is skewed to low complexity. Composition is skewed to basic and acidic residues over residues 370-379 (EELKGAEKGK) and 395-412 (PQRE…RGLV). The span at 413–429 (EEEDGDEEEEDEDEDEQ) shows a compositional bias: acidic residues. A compositionally biased stretch (basic and acidic residues) spans 434-449 (EFEKELEGMLLPSDRE). A compositionally biased stretch (basic and acidic residues) spans 631–646 (EANKERQRQSELESNY). Over residues 657 to 666 (DTGDLDEFDF) the composition is skewed to acidic residues.

This sequence belongs to the OS-9 family. In terms of assembly, component of the HRD1 complex, which comprises at least SYNV1/HRD1, DERL1/2, FAM8A1, HERPUD1/HERP, OS9, SEL1L and UBE2J1. FAM8A1 is stabilized by interaction with SYNV1, which prevents its proteasomal degradation. OS9 and UBE2J1 recruitment to the complex may be mediated by SEL1L. Through this complex, may interact with ERLEC1 and HSPA5. Interacts (via C-terminus) with CPNE6 (via second C2 domain); this interaction occurs in a calcium-dependent manner in vitro. Interacts with CREB3. Post-translationally, intramolecular disulfide bonds.

It is found in the endoplasmic reticulum lumen. In terms of biological role, lectin component of the HRD1 complex, which functions in endoplasmic reticulum (ER) quality control and ER-associated degradation (ERAD). Specifically recognizes and binds improperly folded glycoproteins as well as hyperglycosylated proteins, retain them in the ER, and transfers them to the ubiquitination machinery and promote their degradation. Possible targets include TRPV4 as well as hyperglycosylated HSP90B1. The protein is Protein OS-9 (Os9) of Rattus norvegicus (Rat).